The sequence spans 421 residues: Diaminobutyrate--2-oxoglutarate transaminase (421 aa).

The residue at position 267 (Lys-267) is an N6-(pyridoxal phosphate)lysine.

The protein belongs to the class-III pyridoxal-phosphate-dependent aminotransferase family. In terms of assembly, homohexamer. It depends on pyridoxal 5'-phosphate as a cofactor.

The catalysed reaction is L-2,4-diaminobutanoate + 2-oxoglutarate = L-aspartate 4-semialdehyde + L-glutamate. It participates in amine and polyamine biosynthesis; ectoine biosynthesis; L-ectoine from L-aspartate 4-semialdehyde: step 1/3. Functionally, catalyzes reversively the conversion of L-aspartate beta-semialdehyde (ASA) to L-2,4-diaminobutyrate (DABA) by transamination with L-glutamate. Seems to use L-glutamate specifically as the amino group donor to ASA, as it is not active with L-alanine, L-glutamine, L-aspartate and L-lysine, and is only poorly active with L-homoserine. In the reverse reaction, gamma-aminobutyric acid (GABA) and L-ornithine can also be used as amino group donors to 2-oxoglutarate, but with a reduced activity compared to that with DABA. This chain is Diaminobutyrate--2-oxoglutarate transaminase (ectB), found in Halomonas elongata (strain ATCC 33173 / DSM 2581 / NBRC 15536 / NCIMB 2198 / 1H9).